Here is a 209-residue protein sequence, read N- to C-terminus: Peptidyl-tRNA hydrolase (209 aa).

Residue Y14 participates in tRNA binding. Residue H19 is the Proton acceptor of the active site. TRNA contacts are provided by Y68, N70, and N116.

Belongs to the PTH family. Monomer.

It localises to the cytoplasm. The catalysed reaction is an N-acyl-L-alpha-aminoacyl-tRNA + H2O = an N-acyl-L-amino acid + a tRNA + H(+). In terms of biological role, hydrolyzes ribosome-free peptidyl-tRNAs (with 1 or more amino acids incorporated), which drop off the ribosome during protein synthesis, or as a result of ribosome stalling. Catalyzes the release of premature peptidyl moieties from peptidyl-tRNA molecules trapped in stalled 50S ribosomal subunits, and thus maintains levels of free tRNAs and 50S ribosomes. This Phenylobacterium zucineum (strain HLK1) protein is Peptidyl-tRNA hydrolase.